A 290-amino-acid chain; its full sequence is Putative tyrosine recombinase TTE1313 (290 aa).

In terms of domain architecture, Core-binding (CB) spans 1–85 (MAESVVGEFL…SIKAFYHYLF (85 aa)). In terms of domain architecture, Tyr recombinase spans 106–290 (KEPVTLTVEQ…EVYNKFHPRA (185 aa)). Residue R239 is part of the active site. Y283 functions as the O-(3'-phospho-DNA)-tyrosine intermediate in the catalytic mechanism.

This sequence belongs to the 'phage' integrase family.

The protein resides in the cytoplasm. Functionally, site-specific tyrosine recombinase, which acts by catalyzing the cutting and rejoining of the recombining DNA molecules. In Caldanaerobacter subterraneus subsp. tengcongensis (strain DSM 15242 / JCM 11007 / NBRC 100824 / MB4) (Thermoanaerobacter tengcongensis), this protein is Putative tyrosine recombinase TTE1313.